The following is a 252-amino-acid chain: Triosephosphate isomerase (252 aa).

10-12 provides a ligand contact to substrate; sequence NWK. Catalysis depends on His96, which acts as the Electrophile. The active-site Proton acceptor is Glu168. Substrate is bound by residues Gly174, Ser214, and 235–236; that span reads GG.

It belongs to the triosephosphate isomerase family. In terms of assembly, homodimer.

It localises to the cytoplasm. It catalyses the reaction D-glyceraldehyde 3-phosphate = dihydroxyacetone phosphate. Its pathway is carbohydrate biosynthesis; gluconeogenesis. It functions in the pathway carbohydrate degradation; glycolysis; D-glyceraldehyde 3-phosphate from glycerone phosphate: step 1/1. Functionally, involved in the gluconeogenesis. Catalyzes stereospecifically the conversion of dihydroxyacetone phosphate (DHAP) to D-glyceraldehyde-3-phosphate (G3P). This chain is Triosephosphate isomerase, found in Streptococcus gordonii (strain Challis / ATCC 35105 / BCRC 15272 / CH1 / DL1 / V288).